A 427-amino-acid polypeptide reads, in one-letter code: Flotillin-1 (427 aa).

S19, S163, and S385 each carry phosphoserine. The residue at position 387 (T387) is a Phosphothreonine.

The protein belongs to the band 7/mec-2 family. Flotillin subfamily. In terms of assembly, heterooligomeric complex of flotillin-1 and flotillin-2 and caveolin-1 and caveolin-2. Interacts with ECPAS.

The protein resides in the cell membrane. The protein localises to the endosome. Its subcellular location is the membrane. It localises to the caveola. It is found in the melanosome. The protein resides in the membrane raft. May act as a scaffolding protein within caveolar membranes, functionally participating in formation of caveolae or caveolae-like vesicles. This chain is Flotillin-1 (FLOT1), found in Pongo abelii (Sumatran orangutan).